The primary structure comprises 321 residues: Reticulon-2 (321 aa).

Disordered stretches follow at residues 1–36 (MGHV…SPVT) and 65–85 (PPVR…PREE). Residues 134–321 (VKDLLYWRDI…TVKKPPAKQK (188 aa)) form the Reticulon domain. A run of 2 helical transmembrane segments spans residues 163–183 (FSVI…TLTL) and 250–270 (FLVI…ITVL).

It is found in the endoplasmic reticulum membrane. It localises to the sarcoplasmic reticulum membrane. Its subcellular location is the cell membrane. The protein localises to the sarcolemma. The protein resides in the T-tubule. It is found in the cytoplasm. It localises to the myofibril. Its subcellular location is the sarcomere. The protein localises to the z line. The protein resides in the cytoskeleton. Functionally, inhibits amyloid precursor protein processing, probably by blocking BACE1 activity. Enhances trafficking of the glutamate transporter SLC1A1/EAAC1 from the endoplasmic reticulum to the cell surface. Plays a role in the translocation of SLC2A4/GLUT4 from intracellular membranes to the cell membrane which facilitates the uptake of glucose into the cell. The sequence is that of Reticulon-2 from Xenopus tropicalis (Western clawed frog).